Here is a 466-residue protein sequence, read N- to C-terminus: Zinc metalloproteinase/disintegrin (466 aa).

The first 6 residues, 1–6 (FPYQGS), serve as a signal peptide directing secretion. Positions 7–174 (SIILESGNVN…PIKKASQLIV (168 aa)) are excised as a propeptide. In terms of domain architecture, Peptidase M12B spans 180-377 (RYMEIVIVVD…ENPPCILNKP (198 aa)). Ca(2+) contacts are provided by Glu183 and Asp267. Disulfide bonds link Cys291-Cys372, Cys331-Cys356, and Cys333-Cys339. A Zn(2+)-binding site is contributed by His316. The active site involves Glu317. Positions 320 and 326 each coordinate Zn(2+). Residues Cys372 and Asn375 each contribute to the Ca(2+) site. Residues 377 to 401 (PLRTDTVSTPVSGNELLEAGKDYDR) constitute a propeptide that is removed on maturation. The 82-residue stretch at 385 to 466 (TPVSGNELLE…GDCPRNPYHA (82 aa)) folds into the Disintegrin domain. 3 disulfide bridges follow: Cys422-Cys428, Cys427-Cys452, and Cys440-Cys459. The Cell attachment site signature appears at 444–446 (RGD).

It belongs to the venom metalloproteinase (M12B) family. P-II subfamily. P-IIa sub-subfamily. Monomer. Requires Zn(2+) as cofactor. In terms of tissue distribution, expressed by the venom gland.

The protein localises to the secreted. Functionally, impairs hemostasis in the envenomed animal. Its function is as follows. Inhibits platelet aggregation induced by ADP, thrombin, platelet-activating factor and collagen. Acts by inhibiting fibrinogen interaction with platelet receptors GPIIb/GPIIIa (ITGA2B/ITGB3). This is Zinc metalloproteinase/disintegrin from Deinagkistrodon acutus (Hundred-pace snake).